The chain runs to 624 residues: Probable pectinesterase/pectinesterase inhibitor 47 (624 aa).

The N-terminal stretch at M1–A19 is a signal peptide. Residues P24–C88 are disordered. A compositionally biased stretch (pro residues) spans T25–P84. Positions Q74–L236 are pectinesterase inhibitor 47. N225, N330, N369, and N376 each carry an N-linked (GlcNAc...) asparagine glycan. The segment at A307–D606 is pectinesterase 47. T385 contributes to the substrate binding site. A glycan (N-linked (GlcNAc...) asparagine) is linked at N387. Position 415 (Q415) interacts with substrate. The Proton donor; for pectinesterase activity role is filled by D438. Residues C452 and C472 are joined by a disulfide bond. Catalysis depends on D459, which acts as the Nucleophile; for pectinesterase activity. N505 carries N-linked (GlcNAc...) asparagine glycosylation. Substrate contacts are provided by R527 and W529. N-linked (GlcNAc...) asparagine glycosylation is found at N555, N596, and N601.

In the N-terminal section; belongs to the PMEI family. The protein in the C-terminal section; belongs to the pectinesterase family.

The protein resides in the secreted. It localises to the cell wall. The catalysed reaction is [(1-&gt;4)-alpha-D-galacturonosyl methyl ester](n) + n H2O = [(1-&gt;4)-alpha-D-galacturonosyl](n) + n methanol + n H(+). The protein operates within glycan metabolism; pectin degradation; 2-dehydro-3-deoxy-D-gluconate from pectin: step 1/5. Functionally, acts in the modification of cell walls via demethylesterification of cell wall pectin. The protein is Probable pectinesterase/pectinesterase inhibitor 47 (PME47) of Arabidopsis thaliana (Mouse-ear cress).